The following is a 709-amino-acid chain: ATP-dependent zinc metalloprotease FtsH (709 aa).

Residues 1 to 25 lie on the Cytoplasmic side of the membrane; sequence MKKNKGLNEATTSEKPQFPKRTAWK. The chain crosses the membrane as a helical span at residues 26–46; it reads IFWWVVILAIIIGILVYILMP. Topologically, residues 47–171 are extracellular; that stretch reads RATTAVIEKW…FVAPDTRARD (125 aa). A helical membrane pass occupies residues 172-192; it reads VLNIFFGLLPIIIFVIFFLLF. Residues 193 to 709 are Cytoplasmic-facing; the sequence is WRSARGISGG…DTEKDSETNS (517 aa). 268-275 lines the ATP pocket; it reads GPPGTGKT. His490 serves as a coordination point for Zn(2+). The active site involves Glu491. Zn(2+)-binding residues include His494 and Asp569. Residues 673–709 form a disordered region; it reads ILAQKQEQQAKQKAEAKEAKLNKKTEKDTEKDSETNS. Positions 680–709 are enriched in basic and acidic residues; that stretch reads QQAKQKAEAKEAKLNKKTEKDTEKDSETNS.

This sequence in the central section; belongs to the AAA ATPase family. The protein in the C-terminal section; belongs to the peptidase M41 family. In terms of assembly, homohexamer. It depends on Zn(2+) as a cofactor.

The protein localises to the cell membrane. Acts as a processive, ATP-dependent zinc metallopeptidase for both cytoplasmic and membrane proteins. Plays a role in the quality control of integral membrane proteins. This chain is ATP-dependent zinc metalloprotease FtsH, found in Mycoplasma pneumoniae (strain ATCC 29342 / M129 / Subtype 1) (Mycoplasmoides pneumoniae).